Reading from the N-terminus, the 457-residue chain is Nuclear hormone receptor family member odr-7 (457 aa).

Disordered stretches follow at residues 57 to 95 (EQPN…DNDA) and 230 to 252 (KQES…LQQP). The segment at residues 327–407 (LHDCQVCLST…IGMLPENVQH (81 aa)) is a DNA-binding region (nuclear receptor). 2 NR C4-type zinc fingers span residues 330-351 (CQVC…CAAC) and 367-395 (CKRN…MKRC). The interval 435–457 (QPSGSAAQPITVSSSESPRHTTN) is disordered.

The protein belongs to the nuclear hormone receptor family. NR0 subfamily. In terms of assembly, heterodimer with a partner that confers DNA binding capacity or a nuclear hormone receptor whose DNA binding it inhibits. Expressed predominantly in the AWA neurons.

Its subcellular location is the nucleus. The protein resides in the cytoplasm. It localises to the perinuclear region. Its function is as follows. Required for the function of one pair of chemosensory neurons called AWA neurons that are involved in chemotaxis to volatile odorants. Acts in a pathway that specifies olfactory neuronal fate. Regulates the transcription of olfactory signaling molecules such as odr-10 that specify AWA neuron identity and function. Represses the expression in AWA neurons of factors such as str-2 which specify AWC neuron identity. The protein is Nuclear hormone receptor family member odr-7 (odr-7) of Caenorhabditis elegans.